Here is a 78-residue protein sequence, read N- to C-terminus: Pigment-dispersing hormone 2 peptides (78 aa).

The N-terminal stretch at 1–21 is a signal peptide; the sequence is MRSGVFVAVLVVVVFALLTQG. Ala-75 carries the alanine amide modification.

It belongs to the arthropod PDH family. As to expression, eyestalk sinus gland.

Its subcellular location is the secreted. Functionally, the pigment-dispersing hormone causes the migration of the distal retinal pigment into the proximal end of the pigment chromatophore cells and thus decreases the amount of light entering the retinulas. May also function as a neurotransmitter and/or neuromodulator. The polypeptide is Pigment-dispersing hormone 2 peptides (PDH2) (Callinectes sapidus (Blue crab)).